The primary structure comprises 131 residues: Small ribosomal subunit protein uS12c (131 aa).

It belongs to the universal ribosomal protein uS12 family. In terms of assembly, part of the 30S ribosomal subunit.

It localises to the plastid. Its subcellular location is the chloroplast. With S4 and S5 plays an important role in translational accuracy. Located at the interface of the 30S and 50S subunits. The chain is Small ribosomal subunit protein uS12c (rps12) from Stigeoclonium helveticum (Green alga).